The sequence spans 227 residues: Ion-translocating oxidoreductase complex subunit E (227 aa).

The next 5 membrane-spanning stretches (helical) occupy residues 57 to 77 (LGLG…ISLF), 89 to 109 (IYVM…NAFA), 111 to 131 (PVYQ…IVIG), 146 to 166 (AFDG…LGAI), and 200 to 220 (GLLL…ILAV).

It belongs to the NqrDE/RnfAE family. As to quaternary structure, the complex is composed of six subunits: RnfA, RnfB, RnfC, RnfD, RnfE and RnfG.

It is found in the cell inner membrane. Part of a membrane-bound complex that couples electron transfer with translocation of ions across the membrane. This Haemophilus ducreyi (strain 35000HP / ATCC 700724) protein is Ion-translocating oxidoreductase complex subunit E.